Consider the following 461-residue polypeptide: Kremen protein 2 (461 aa).

An N-terminal signal peptide occupies residues Met-1 to Ala-24. Residues Gly-25 to Ser-363 are Extracellular-facing. The Kringle domain occupies Glu-34–Cys-118. Intrachain disulfides connect Cys-35/Cys-118, Cys-59/Cys-99, and Cys-88/Cys-113. Residue Asn-48 is glycosylated (N-linked (GlcNAc...) asparagine). The WSC domain maps to Met-120–Ser-214. Cys-218 and Cys-244 are disulfide-bonded. Residues Cys-218–Leu-325 form the CUB domain. N-linked (GlcNAc...) asparagine glycans are attached at residues Asn-221, Asn-243, and Asn-350. The interval Val-329 to Pro-357 is disordered. Residues Ile-364 to Leu-386 form a helical membrane-spanning segment. The Cytoplasmic segment spans residues Arg-387–Leu-461. The interval Cys-429–Ser-452 is disordered.

In terms of assembly, interacts with ERLEC1. Forms a ternary complex with DKK1 and LRP6.

It localises to the membrane. In terms of biological role, receptor for Dickkopf proteins. Cooperates with DKK1/2 to inhibit Wnt/beta-catenin signaling by promoting the endocytosis of Wnt receptors LRP5 and LRP6. Plays a role in limb development; attenuates Wnt signaling in the developing limb to allow normal limb patterning and can also negatively regulate bone formation. This chain is Kremen protein 2 (Kremen2), found in Mus musculus (Mouse).